A 352-amino-acid polypeptide reads, in one-letter code: Septin-2B (352 aa).

The 273-residue stretch at 33 to 305 (KGFEFTLMVV…ENFRSERLKK (273 aa)) folds into the Septin-type G domain. Positions 43–50 (GESGLGKS) are G1 motif. Residues 43–50 (GESGLGKS), T77, G103, 182–190 (KADTLTLRE), G240, and R255 each bind GTP. Positions 100 to 103 (DTPG) are G3 motif. The segment at 181–184 (AKAD) is G4 motif. The segment at 259 to 269 (WGVVEVENPEH) is important for dimerization.

This sequence belongs to the TRAFAC class TrmE-Era-EngA-EngB-Septin-like GTPase superfamily. Septin GTPase family. Septins polymerize into heterooligomeric protein complexes that form filaments, and associate with cellular membranes, actin filaments and microtubules. GTPase activity is required for filament formation. Can form heterooligomers with other family members and form filaments. Interacts with wdpcp.

It is found in the cytoplasm. It localises to the cytoskeleton. The protein resides in the spindle. Its subcellular location is the cleavage furrow. The protein localises to the midbody. It is found in the cell projection. It localises to the cilium membrane. Its function is as follows. Filament-forming cytoskeletal GTPase. Required for normal organization of the actin cytoskeleton. Plays a role in the biogenesis of polarized columnar-shaped epithelium. Required for the progression through mitosis through regulation of chromosome congression. During anaphase, may be required for chromosome segregation and spindle elongation. Probably plays a role in ciliogenesis and collective cell movements including convergent extension during gastrulation. In cilia, required for the integrity of the diffusion barrier at the base of the primary cilium that prevents diffusion of transmembrane proteins between the cilia and plasma membranes. Controls cell shape and not polarization of cells during convergent extension. This is Septin-2B (sept2-b) from Xenopus laevis (African clawed frog).